The primary structure comprises 134 residues: MSWQTYVDDHLMCDIEGHEDHRLTAAAIVGHDGSVWAQSATFPQFRPEEMNGIMTDFNEPGHLAPTGLHLGGTKYMVIQGEAGAVIRGKKGSGGITIKKTGQALVFGIYEEPVTPGQCNMVVERLGDYLLEQGL.

Cysteines 13 and 118 form a disulfide. The Involved in PIP2 interaction signature appears at 84 to 100 (AVIRGKKGSGGITIKKT). At Thr-114 the chain carries Phosphothreonine.

This sequence belongs to the profilin family. In terms of assembly, occurs in many kinds of cells as a complex with monomeric actin in a 1:1 ratio. Post-translationally, phosphorylated by MAP kinases.

The protein localises to the cytoplasm. It localises to the cytoskeleton. In terms of biological role, binds to actin and affects the structure of the cytoskeleton. At high concentrations, profilin prevents the polymerization of actin, whereas it enhances it at low concentrations. The protein is Profilin-5 of Olea europaea (Common olive).